Reading from the N-terminus, the 384-residue chain is Neuropeptide Y receptor type 1 (384 aa).

The Extracellular portion of the chain corresponds to 1 to 44; the sequence is MNSTLFSQVENHSVHSNFSEKNAQLLAFENDDCHLPLAMIFTLA. Asn2, Asn11, and Asn17 each carry an N-linked (GlcNAc...) asparagine glycan. A helical membrane pass occupies residues 45–65; it reads LAYGAVIILGVSGNLALIIII. Residues 66-76 lie on the Cytoplasmic side of the membrane; that stretch reads LKQKEMRNVTN. A helical membrane pass occupies residues 77-97; the sequence is ILIVNLSFSDLLVAIMCLPFT. The Extracellular portion of the chain corresponds to 98–116; sequence FVYTLMDHWVFGEAMCKLN. Cys113 and Cys198 are disulfide-bonded. Residues 117–137 traverse the membrane as a helical segment; that stretch reads PFVQCVSITVSIFSLVLIAVE. Residues 138-154 are Cytoplasmic-facing; the sequence is RHQLIINPRGWRPNNRH. Residues 155-175 form a helical membrane-spanning segment; that stretch reads AYVGIAVIWVLAVASSLPFLI. Over 176 to 211 the chain is Extracellular; that stretch reads YQVMTDEPFQNVTLDAYKDKYVCFDQFPSDSHRLSY. A helical transmembrane segment spans residues 212–232; it reads TTLLLVLQYFGPLCFIFICYF. Topologically, residues 233–260 are cytoplasmic; that stretch reads KIYIRLKRRNNMMDKMRDNKYRSSETKR. A helical transmembrane segment spans residues 261 to 281; the sequence is INIMLLSIVVAFAVCWLPLTI. Residues 282-299 lie on the Extracellular side of the membrane; it reads FNTVFDWNHQIIATCNHN. A helical membrane pass occupies residues 300–320; the sequence is LLFLLCHLTAMISTCVNPIFY. Over 321-384 the chain is Cytoplasmic; it reads GFLNKNFQRD…INNNDDNEKI (64 aa). The S-palmitoyl cysteine moiety is linked to residue Cys338. Ser368 is subject to Phosphoserine.

The protein belongs to the G-protein coupled receptor 1 family.

It localises to the cell membrane. Receptor for neuropeptide Y and peptide YY. The rank order of affinity of this receptor for pancreatic polypeptides is NPY &gt; [Pro-34] PYY, PYY and [Leu-31, Pro-34] NPY &gt; NPY (2-36) &gt; [Ile-31, Gln-34] PP and PYY (3-36) &gt; PP &gt; NPY free acid. The protein is Neuropeptide Y receptor type 1 (NPY1R) of Homo sapiens (Human).